Consider the following 193-residue polypeptide: Pyridoxal 5'-phosphate synthase subunit PdxT (193 aa).

52 to 54 (GES) is an L-glutamine binding site. Cys-84 functions as the Nucleophile in the catalytic mechanism. L-glutamine-binding positions include Arg-111 and 139–140 (IR). Catalysis depends on charge relay system residues His-176 and Glu-178.

It belongs to the glutaminase PdxT/SNO family. In the presence of PdxS, forms a dodecamer of heterodimers. Only shows activity in the heterodimer.

It carries out the reaction aldehydo-D-ribose 5-phosphate + D-glyceraldehyde 3-phosphate + L-glutamine = pyridoxal 5'-phosphate + L-glutamate + phosphate + 3 H2O + H(+). The catalysed reaction is L-glutamine + H2O = L-glutamate + NH4(+). It functions in the pathway cofactor biosynthesis; pyridoxal 5'-phosphate biosynthesis. In terms of biological role, catalyzes the hydrolysis of glutamine to glutamate and ammonia as part of the biosynthesis of pyridoxal 5'-phosphate. The resulting ammonia molecule is channeled to the active site of PdxS. The polypeptide is Pyridoxal 5'-phosphate synthase subunit PdxT (Pasteurella multocida (strain Pm70)).